The sequence spans 1349 residues: Elongator complex protein 1 (1349 aa).

Phosphoserine occurs at positions 529, 539, 551, 636, and 828. Residues 919–1349 (QDVNVVYKSA…DFPKSHIVDF (431 aa)) form a mediates dimerization region. Phosphoserine; by HRR25 occurs at positions 1198 and 1202. Ser1205 and Ser1209 each carry phosphoserine. A compositionally biased stretch (low complexity) spans 1214-1228 (YTGKTGGTAKTGASR). The interval 1214-1245 (YTGKTGGTAKTGASRRTAKNKRREERKRARGK) is disordered. Positions 1228–1246 (RRTAKNKRREERKRARGKK) are required for binding to tRNA.

It belongs to the ELP1/IKA1 family. In terms of assembly, homodimer; dimerization promotes ELP1/IKI3 stability and elongator complex formation. Component of the elongator complex which consists of ELP1/IKI3, ELP2, ELP3, ELP4, ELP5/IKI1 and ELP6. The elongator complex is composed of two copies of the Elp123 subcomplex (composed of ELP1/IKI3, ELP2 and ELP3) and two copies of the Elp456 subcomplex (composed of ELP4, ELP5/IKI1 and ELP6). The Elp123 subcomplex forms a two-lobed scaffold, which binds the Elp456 subcomplex asymmetrically. In the complex, ELP1/IKI3 interacts with ELP2. In each lobe, ELP2 is tightly sandwiched between ELP1/IKI3 and ELP3. The Elp123 subcomplex binds tRNA through ELP1/IKI3 and ELP3 and can bind 2 tRNAs simultaneously. tRNA-binding induces conformational rearrangements which precisely position the targeted anticodon base in the active site. The Elp456 subcomplex binds tRNA and has ATPase activity. ELP1/IKI3 interacts with HRR25 and KTI12. Interacts with KTI11/DPH3. Post-translationally, phosphorylation promotes the tRNA modification function of the elongator complex.

The protein localises to the cytoplasm. It localises to the nucleus. It participates in tRNA modification; 5-methoxycarbonylmethyl-2-thiouridine-tRNA biosynthesis. Functionally, component of the elongator complex which is required for multiple tRNA modifications, including mcm5U (5-methoxycarbonylmethyl uridine), mcm5s2U (5-methoxycarbonylmethyl-2-thiouridine), and ncm5U (5-carbamoylmethyl uridine). The elongator complex catalyzes formation of carboxymethyluridine in the wobble base at position 34 in tRNAs. Functions as a gamma-toxin target (TOT); disruption of the complex confers resistance to Kluyveromyces lactis toxin zymocin (pGKL1 killer toxin). May also be involved in sensitivity to Pichia inositovora toxin. ELP1/IKI3 binds to tRNA, mediating interaction of the elongator complex with tRNA. Independently, may be involved in polarized exocytosis. This chain is Elongator complex protein 1 (IKI3), found in Saccharomyces cerevisiae (strain ATCC 204508 / S288c) (Baker's yeast).